The chain runs to 390 residues: MRYITAGESHGPQLTTIIEGVPAGLPLVADDINEELARRQKGYGRGRRMQIETDQVQIVSGVRHGETLGSPIALVVENRDFAHWTKIMGAEPLTEQEEKEMKRKVTKPRPGHADLNGAIKYGHRDMRNVLERSSARETTVRVAAGAVAKKVLAELGITVAGHVIEIGGVEAKETTYRSIEELKSITEASPVRCLDEEAGNQMIKAIDDAKSNGDSIGGIVEVIVEGMPIGVGSYVHYDRKLDAKLAAAIMSINAFKGVEIGIGFEAAHRPGSEVHDEILWNEEHGYTRRTNNAGGLEGGMTTGMPIVVRGVMKPIPTLYKPLQSVDIDTKEPFTASIERSDSCAVPAASVVAEAVVAWELATALIEQFGLDRMDLIRENIEKHNEYARGF.

Residues R39 and R45 each contribute to the NADP(+) site. The interval 95–117 (EQEEKEMKRKVTKPRPGHADLNG) is disordered. FMN-binding positions include 132-134 (RSS), 253-254 (NA), G298, 313-317 (KPIPT), and R339.

This sequence belongs to the chorismate synthase family. Homotetramer. The cofactor is FMNH2.

It carries out the reaction 5-O-(1-carboxyvinyl)-3-phosphoshikimate = chorismate + phosphate. Its pathway is metabolic intermediate biosynthesis; chorismate biosynthesis; chorismate from D-erythrose 4-phosphate and phosphoenolpyruvate: step 7/7. Functionally, catalyzes the anti-1,4-elimination of the C-3 phosphate and the C-6 proR hydrogen from 5-enolpyruvylshikimate-3-phosphate (EPSP) to yield chorismate, which is the branch point compound that serves as the starting substrate for the three terminal pathways of aromatic amino acid biosynthesis. This reaction introduces a second double bond into the aromatic ring system. This chain is Chorismate synthase 1, found in Bacillus thuringiensis (strain Al Hakam).